The primary structure comprises 121 residues: Small ribosomal subunit protein uS12c (121 aa).

The protein belongs to the universal ribosomal protein uS12 family. Part of the 30S ribosomal subunit.

It is found in the plastid. The protein resides in the chloroplast. With S4 and S5 plays an important role in translational accuracy. Located at the interface of the 30S and 50S subunits. In Bigelowiella natans (Pedinomonas minutissima), this protein is Small ribosomal subunit protein uS12c (rps12).